The sequence spans 337 residues: tRNA N6-adenosine threonylcarbamoyltransferase (337 aa).

Residues His-111 and His-115 each coordinate Fe cation. Substrate is bound by residues 134-138 (LVSGG), Asp-167, Gly-180, and Asn-272. Asp-300 provides a ligand contact to Fe cation.

The protein belongs to the KAE1 / TsaD family. The cofactor is Fe(2+).

The protein resides in the cytoplasm. It carries out the reaction L-threonylcarbamoyladenylate + adenosine(37) in tRNA = N(6)-L-threonylcarbamoyladenosine(37) in tRNA + AMP + H(+). Its function is as follows. Required for the formation of a threonylcarbamoyl group on adenosine at position 37 (t(6)A37) in tRNAs that read codons beginning with adenine. Is involved in the transfer of the threonylcarbamoyl moiety of threonylcarbamoyl-AMP (TC-AMP) to the N6 group of A37, together with TsaE and TsaB. TsaD likely plays a direct catalytic role in this reaction. The chain is tRNA N6-adenosine threonylcarbamoyltransferase from Enterobacter sp. (strain 638).